The following is a 344-amino-acid chain: MPAHAYLCAMDAHAPLIDPFARPITYLRVSVTDRCDFRCTYCMAEHMQFLPKRDLLTLEELDRLCSAFVGLGVRKLRVTGGEPLVRRNIMEFFRAMSRHLGAGLDELTLTTNGSQLARFATELADCGVRRVNVSLDTLDEDRFARITRWGRLPQVLQGIEAAKAAGMRVKINTVALKGFNEDELFRLVGWCADQGHDLTFIEVMPMGEMGEEERLDQYWALSDLRDRLGERFTLTPLAERTGGPARYVRLDETGQKIGFITPLTHNFCESCNRVRITCTGELFMCLGQEDRADLRAPLRAGAEDAPLRAAIRDAIARKPKGHDFDYSRRHVAGQVSRYMSHTGG.

One can recognise a Radical SAM core domain in the interval 19 to 244; that stretch reads PFARPITYLR…TPLAERTGGP (226 aa). R28 provides a ligand contact to GTP. [4Fe-4S] cluster is bound by residues C35 and C39. Y41 provides a ligand contact to S-adenosyl-L-methionine. [4Fe-4S] cluster is bound at residue C42. A GTP-binding site is contributed by R77. S-adenosyl-L-methionine is bound at residue G81. Residue T110 coordinates GTP. S-adenosyl-L-methionine is bound at residue S134. K170 is a binding site for GTP. Position 204 (M204) interacts with S-adenosyl-L-methionine. C268 and C271 together coordinate [4Fe-4S] cluster. 273-275 is a binding site for GTP; it reads RVR. C285 lines the [4Fe-4S] cluster pocket.

This sequence belongs to the radical SAM superfamily. MoaA family. As to quaternary structure, monomer and homodimer. Requires [4Fe-4S] cluster as cofactor.

The enzyme catalyses GTP + AH2 + S-adenosyl-L-methionine = (8S)-3',8-cyclo-7,8-dihydroguanosine 5'-triphosphate + 5'-deoxyadenosine + L-methionine + A + H(+). The protein operates within cofactor biosynthesis; molybdopterin biosynthesis. Catalyzes the cyclization of GTP to (8S)-3',8-cyclo-7,8-dihydroguanosine 5'-triphosphate. This chain is GTP 3',8-cyclase, found in Paracoccus denitrificans (strain Pd 1222).